The following is a 624-amino-acid chain: LRR receptor kinase BAK1 (624 aa).

Residues 1-25 (MAAPRWAVWAVLLLRLLVPAARVLA) form the signal peptide. Residues 26–237 (NMEGDALHSL…QSPGSSSSTG (212 aa)) are Extracellular-facing. 4 LRR repeats span residues 91-115 (LKNL…LGNL), 117-139 (NLVS…LGNL), 140-163 (LKLR…LTAI), and 164-188 (TALQ…SFSL). 5 N-linked (GlcNAc...) asparagine glycosylation sites follow: Asn103, Asn114, Asn127, Asn149, and Asn175. Residues 205–236 (TTKPCPGAPPFSPPPPYNPPTPVQSPGSSSST) form a disordered region. Residues 210 to 227 (PGAPPFSPPPPYNPPTPV) show a composition bias toward pro residues. A helical membrane pass occupies residues 238–258 (AIAGGVAAGAALLFAIPAIGF). The Cytoplasmic portion of the chain corresponds to 259 to 624 (AWYRRRKPQE…LHAVELSGPR (366 aa)). Residues 301 to 588 (FSNKNILGRG…GLAERWEEWQ (288 aa)) enclose the Protein kinase domain. ATP is bound by residues 307–315 (LGRGGFGKV) and Lys329. Asp428 serves as the catalytic Proton acceptor.

Belongs to the protein kinase superfamily. Ser/Thr protein kinase family. Forms homodimers. Interacts with BRI1. Interacts with REM4.1.

The protein resides in the cell membrane. It catalyses the reaction L-seryl-[protein] + ATP = O-phospho-L-seryl-[protein] + ADP + H(+). The enzyme catalyses L-threonyl-[protein] + ATP = O-phospho-L-threonyl-[protein] + ADP + H(+). Its function is as follows. LRR receptor kinase involved in defense response. Does not seem to be required specifically for XA21-mediated immunity or basal resistance to Xanthomonas oryzae pv. oryzae (Xoo), or immunity to Magnaporthe oryzae. Involved in brassinosteroid (BR) signaling pathway. Acts as a coreceptor of BRI1. Forms at the plasma membrane a receptor complex with BRI1 which is activated in response to brassinolide. Phosphorylates BRI1. Required for normal plant growth and leaf development. Possesses kinase activity in vitro. The sequence is that of LRR receptor kinase BAK1 from Oryza sativa subsp. indica (Rice).